Consider the following 409-residue polypeptide: Glutamate--tRNA ligase 2 (409 aa).

The 'HIGH' region motif lies at 9–19 (PSPTGNLHIGG). A 'KMSKS' region motif is present at residues 198-202 (KLSKR). Lysine 201 lines the ATP pocket.

This sequence belongs to the class-I aminoacyl-tRNA synthetase family. Glutamate--tRNA ligase type 1 subfamily. As to quaternary structure, monomer.

It is found in the cytoplasm. It carries out the reaction tRNA(Glu) + L-glutamate + ATP = L-glutamyl-tRNA(Glu) + AMP + diphosphate. Functionally, catalyzes the attachment of glutamate to tRNA(Glu) in a two-step reaction: glutamate is first activated by ATP to form Glu-AMP and then transferred to the acceptor end of tRNA(Glu). This is Glutamate--tRNA ligase 2 from Neorickettsia sennetsu (strain ATCC VR-367 / Miyayama) (Ehrlichia sennetsu).